We begin with the raw amino-acid sequence, 158 residues long: Biotin carboxyl carrier protein of acetyl-CoA carboxylase (158 aa).

A Biotinyl-binding domain is found at 81 to 157 (YATIVSPMVG…DCGQALMKVE (77 aa)). An N6-biotinyllysine modification is found at K123.

It localises to the plastid. The protein localises to the chloroplast. It functions in the pathway lipid metabolism; fatty acid biosynthesis. Functionally, this protein is a component of the acetyl coenzyme A carboxylase complex; first, biotin carboxylase catalyzes the carboxylation of the carrier protein and then the transcarboxylase transfers the carboxyl group to form malonyl-CoA. The sequence is that of Biotin carboxyl carrier protein of acetyl-CoA carboxylase (accB) from Pyropia yezoensis (Susabi-nori).